A 306-amino-acid chain; its full sequence is Acetaldehyde dehydrogenase (306 aa).

Residue C131 is the Acyl-thioester intermediate of the active site. NAD(+) is bound by residues 162–170 and N273; that span reads SAGPGTRKN.

It belongs to the acetaldehyde dehydrogenase family.

It catalyses the reaction acetaldehyde + NAD(+) + CoA = acetyl-CoA + NADH + H(+). The polypeptide is Acetaldehyde dehydrogenase (Albidiferax ferrireducens (strain ATCC BAA-621 / DSM 15236 / T118) (Rhodoferax ferrireducens)).